A 163-amino-acid chain; its full sequence is UPF0303 protein SAV_5210 (163 aa).

The protein belongs to the UPF0303 family.

This Streptomyces avermitilis (strain ATCC 31267 / DSM 46492 / JCM 5070 / NBRC 14893 / NCIMB 12804 / NRRL 8165 / MA-4680) protein is UPF0303 protein SAV_5210.